The primary structure comprises 272 residues: Phosphatidylglycerol--prolipoprotein diacylglyceryl transferase (272 aa).

7 consecutive transmembrane segments (helical) span residues 17-37 (LQVHWYGLMYLLAFLCAWGLA), 55-75 (LVFYGALGVVLGGRIGYVLFY), 90-110 (VWTGGMSFHGGFLGVMIAMLF), 125-145 (FIAPCVPTGLMLGRIGNFIGG), 174-194 (PSQIYQALCEGLLLFIILWWF), 202-222 (MAVSALFLMGYGVARFVMEFF), and 230-250 (GFILFGWMTKGQILTVPMLLI). Arg138 is a binding site for a 1,2-diacyl-sn-glycero-3-phospho-(1'-sn-glycerol).

This sequence belongs to the Lgt family.

The protein resides in the cell inner membrane. It carries out the reaction L-cysteinyl-[prolipoprotein] + a 1,2-diacyl-sn-glycero-3-phospho-(1'-sn-glycerol) = an S-1,2-diacyl-sn-glyceryl-L-cysteinyl-[prolipoprotein] + sn-glycerol 1-phosphate + H(+). Its pathway is protein modification; lipoprotein biosynthesis (diacylglyceryl transfer). In terms of biological role, catalyzes the transfer of the diacylglyceryl group from phosphatidylglycerol to the sulfhydryl group of the N-terminal cysteine of a prolipoprotein, the first step in the formation of mature lipoproteins. The chain is Phosphatidylglycerol--prolipoprotein diacylglyceryl transferase from Acinetobacter baumannii (strain SDF).